We begin with the raw amino-acid sequence, 364 residues long: Fructose-1,6-bisphosphatase class 1 2 (364 aa).

Residues glutamate 101, aspartate 123, leucine 125, and aspartate 126 each coordinate Mg(2+). Substrate is bound by residues 126–129 (DGSS) and asparagine 218. Glutamate 290 provides a ligand contact to Mg(2+).

It belongs to the FBPase class 1 family. As to quaternary structure, homotetramer. The cofactor is Mg(2+).

The protein resides in the cytoplasm. The catalysed reaction is beta-D-fructose 1,6-bisphosphate + H2O = beta-D-fructose 6-phosphate + phosphate. It participates in carbohydrate biosynthesis; gluconeogenesis. In Cupriavidus necator (strain ATCC 17699 / DSM 428 / KCTC 22496 / NCIMB 10442 / H16 / Stanier 337) (Ralstonia eutropha), this protein is Fructose-1,6-bisphosphatase class 1 2.